A 255-amino-acid polypeptide reads, in one-letter code: MEIIPAIDLLDGACVRLHQGDYDQVTRFSDDPVAQALSWQSQGAKRLHLVDLDGAKRGEPANDAAVRAIANALDIPVQLGGGVRSIERAEDLLNCGLERVILGTVAIEQPDLVQVLAERHPGSVVVGIDANKGKVATRGWLEQSDVLATDLARRFSDSGIAAIITTDIATDGTLAGPNLDALREMAQASSVPVIASGGIGCMADLLSLLPLEDQGVSGVIVGRALYDGRIDLAEAIGAIGDDRLQDITCGSTDLA.

D8 functions as the Proton acceptor in the catalytic mechanism. The Proton donor role is filled by D129.

It belongs to the HisA/HisF family.

The protein localises to the cytoplasm. The enzyme catalyses 1-(5-phospho-beta-D-ribosyl)-5-[(5-phospho-beta-D-ribosylamino)methylideneamino]imidazole-4-carboxamide = 5-[(5-phospho-1-deoxy-D-ribulos-1-ylimino)methylamino]-1-(5-phospho-beta-D-ribosyl)imidazole-4-carboxamide. Its pathway is amino-acid biosynthesis; L-histidine biosynthesis; L-histidine from 5-phospho-alpha-D-ribose 1-diphosphate: step 4/9. The protein is 1-(5-phosphoribosyl)-5-[(5-phosphoribosylamino)methylideneamino] imidazole-4-carboxamide isomerase of Synechococcus sp. (strain CC9902).